Consider the following 691-residue polypeptide: Lipase 2 (691 aa).

The N-terminal stretch at 1–37 (MLRGQEERKYSIRKYSIGVVSVLAATMFVVSSHEAQA) is a signal peptide. A compositionally biased stretch (polar residues) spans 34–72 (EAQASEKTPTSNAAAQKETLNQPGEQGNAITSHQMQSGK). Positions 34 to 267 (EAQASEKTPT…KPTDKNTDNK (234 aa)) are disordered. Positions 38 to 296 (SEKTPTSNAA…ADAKKVRPLK (259 aa)) are excised as a propeptide. Residues 73–82 (QLDDMHKENG) are compositionally biased toward basic and acidic residues. Composition is skewed to polar residues over residues 83-115 (KSGT…NDNQ), 125-172 (SKQS…QPSI), and 186-207 (PTST…AQDA). 2 stretches are compositionally biased toward basic and acidic residues: residues 226–238 (IDAK…RQSE) and 258–267 (KPTDKNTDNK). The Nucleophile role is filled by Ser413. Gly580 serves as a coordination point for Ca(2+). Asp604 serves as the catalytic Charge relay system. Residue Asp645 coordinates Ca(2+). The Charge relay system role is filled by His646. 3 residues coordinate Ca(2+): Asp648, Asp653, and Asp656.

The protein belongs to the AB hydrolase superfamily. Lipase family.

The protein localises to the secreted. The enzyme catalyses a triacylglycerol + H2O = a diacylglycerol + a fatty acid + H(+). This is Lipase 2 (lip2) from Staphylococcus aureus (strain Mu50 / ATCC 700699).